Consider the following 489-residue polypeptide: Toxin coregulated pilus biosynthesis outer membrane protein C (489 aa).

The signal sequence occupies residues 1-16 (MKKTIISTLVIGLVSG). C17 is lipidated: N-palmitoyl cysteine. A lipid anchor (S-diacylglycerol cysteine) is attached at C17. Transmembrane regions (helical) follow at residues 174–190 (FSSS…SSGL), 294–308 (AISL…GASY), 402–417 (QLVS…LPTV), and 442–457 (NYIQ…GGGT).

The protein localises to the cell membrane. Functionally, involved in TCP pilus biogenesis. This chain is Toxin coregulated pilus biosynthesis outer membrane protein C (tcpC), found in Vibrio cholerae serotype O1 (strain ATCC 39315 / El Tor Inaba N16961).